Reading from the N-terminus, the 465-residue chain is Cysteine--tRNA ligase (465 aa).

Zn(2+) is bound at residue cysteine 30. Residues 32–42 carry the 'HIGH' region motif; that stretch reads ITVYDYCHVGH. Positions 214, 239, and 243 each coordinate Zn(2+). Residues 271 to 275 carry the 'KMSKS' region motif; sequence KMSKS. Lysine 274 provides a ligand contact to ATP.

Belongs to the class-I aminoacyl-tRNA synthetase family. As to quaternary structure, monomer. Zn(2+) serves as cofactor.

It localises to the cytoplasm. The enzyme catalyses tRNA(Cys) + L-cysteine + ATP = L-cysteinyl-tRNA(Cys) + AMP + diphosphate. In Burkholderia vietnamiensis (strain G4 / LMG 22486) (Burkholderia cepacia (strain R1808)), this protein is Cysteine--tRNA ligase.